The chain runs to 1483 residues: Guanylyl cyclase, membrane (1483 aa).

The next 6 helical transmembrane spans lie at 50–70 (ISII…YISP), 143–163 (FILR…TFTA), 168–188 (LWKL…LIFE), 198–218 (MVLL…PSML), 219–239 (ASGG…QIAG), and 242–262 (MVLL…ISRF). The segment at 323 to 376 (KKDEESNLTGKKQSKVVVSPPPPPTAAAPQQQDNEISTPQNSRKIVDPQSPSSL) is disordered. Positions 355–376 (DNEISTPQNSRKIVDPQSPSSL) are enriched in polar residues. One can recognise a Guanylate cyclase 1 domain in the interval 395 to 517 (TVLFCEIVNF…DTINTSSRMA (123 aa)). Disordered stretches follow at residues 598-619 (NNTI…THPN) and 672-838 (LTSP…GDDF). Positions 610–619 (GSATGPTHPN) are enriched in polar residues. Low complexity-rich tracts occupy residues 672–684 (LTSP…PQQS), 693–712 (SPRL…SSST), and 720–765 (NNNN…NNNN). Positions 772–786 (SPISQNTTPTGSLSL) are enriched in polar residues. A run of 6 helical transmembrane segments spans residues 907–927 (ILAS…VDYF), 982–1002 (IITG…YVVS), 1016–1036 (VVMV…SVPP), 1040–1060 (IPLD…CYNF), 1061–1081 (SGIK…FIEI), and 1094–1114 (IYLS…ITSY). The region spanning 1168–1296 (TIFLSDIVGF…ESVQITQQME (129 aa)) is the Guanylate cyclase 2 domain. Aspartate 1173, isoleucine 1174, and aspartate 1217 together coordinate Mg(2+). Disordered stretches follow at residues 1348–1369 (QPEV…SLQY) and 1393–1483 (NQND…SESS). A compositionally biased stretch (polar residues) spans 1354-1369 (RSVSVSKSNFGGSLQY). A compositionally biased stretch (low complexity) spans 1405–1416 (NENGNESSSSNI). The segment covering 1432 to 1444 (NEDDESSYEDDQE) has biased composition (acidic residues). The segment covering 1446-1465 (NQYLNNSENNKNNNNNSNQI) has biased composition (low complexity).

This sequence belongs to the adenylyl cyclase class-4/guanylyl cyclase family. Homodimer. It depends on Mg(2+) as a cofactor.

The protein resides in the membrane. The catalysed reaction is GTP = 3',5'-cyclic GMP + diphosphate. With respect to regulation, activated by guanosine 5'-3-O-(thio)triphosphate (GTPgammaS). Inhibited by calcium. Functionally, synthesizes cyclic GMP (cGMP) from GTP, after activation by heterotrimeric or monomeric G proteins. Involved in chemotaxis. The protein is Guanylyl cyclase, membrane (gca) of Dictyostelium discoideum (Social amoeba).